A 107-amino-acid chain; its full sequence is HTH-type transcriptional regulator Rv2034 (107 aa).

An HTH arsR-type domain is found at 1 to 93; it reads MSTYRSPDRA…DLDRFWTRAL (93 aa). The H-T-H motif DNA-binding region spans 33–56; it reads VGELARDLPVSRPAVSQHLKVLKT.

As to quaternary structure, homodimer.

Its activity is regulated as follows. DNA-binding ability is not susceptible to zinc, nickel, cobalt, cadmium, lead, copper and manganese ions. Its function is as follows. Involved in the regulation of lipid metabolism and hypoxic response. Positively regulates transcription of various genes, such as phoP, groEL2 and dosR. Negatively regulates its own transcription. Acts by binding to a specific palindromic sequence motif in promoter regions. The sequence is that of HTH-type transcriptional regulator Rv2034 from Mycobacterium tuberculosis (strain ATCC 25618 / H37Rv).